The primary structure comprises 55 residues: DNA-binding protein (55 aa).

The tract at residues 1–55 (MVYRRRRRSSTGTTYGSTRRRRSSGYRRRPGRPRTYRRSRSRSSTGRRSYRTRYY) is disordered. 2 repeat units span residues 5 to 10 (RRRRSS) and 19 to 24 (RRRRSS). The segment at 5 to 24 (RRRRSSTGTTYGSTRRRRSS) is 2 X 6 AA repeats of R-R-R-R-S-S. Residues 18 to 41 (TRRRRSSGYRRRPGRPRTYRRSRS) show a composition bias toward basic residues.

Interacts with protein AC132. Post-translationally, phosphorylated.

It is found in the virion. The protein resides in the host cytoplasm. Plays a role in viral DNA packaging and nucleocapsid assembly. Promotes viral gene transcription during the late stage of infection while it is non-essential for the basal level of viral gene transcription. In Lepidoptera (butterflies and moths), this protein is DNA-binding protein (P6.9).